A 209-amino-acid polypeptide reads, in one-letter code: High-affinity nitrate transporter 3.2 (209 aa).

The first 22 residues, 1–22 (MAIHTLLFVSLLIFSLIESSSG), serve as a signal peptide directing secretion. The chain crosses the membrane as a helical span at residues 177–197 (LDIASTFFSVFSVVSLFVFFV).

Belongs to the NAR2 family. As to expression, bearly detected in roots and shoots.

It is found in the cell membrane. Its function is as follows. Acts as a dual component transporter with NTR2.1. Required for high-affinity nitrate transport. The sequence is that of High-affinity nitrate transporter 3.2 from Arabidopsis thaliana (Mouse-ear cress).